Reading from the N-terminus, the 139-residue chain is uncharacterized protein (139 aa).

This sequence to M.tuberculosis Rv2798c.

This is an uncharacterized protein from Mycobacterium tuberculosis (strain CDC 1551 / Oshkosh).